Here is a 291-residue protein sequence, read N- to C-terminus: Probable xyloglucan endotransglucosylase/hydrolase protein 16 (291 aa).

A signal peptide spans M1 to S24. Positions G25–Y215 constitute a GH16 domain. The Nucleophile role is filled by E101. Residue E105 is the Proton donor of the active site. E105 contributes to the xyloglucan binding site. An N-linked (GlcNAc...) asparagine glycan is attached at N109. Xyloglucan contacts are provided by residues H118–N120, N128–E130, D194–W195, and G199. 2 cysteine pairs are disulfide-bonded: C223–C232 and C272–C286. R277 serves as a coordination point for xyloglucan.

The protein belongs to the glycosyl hydrolase 16 family. XTH group 2 subfamily. Post-translationally, contains at least one intrachain disulfide bond essential for its enzymatic activity.

It localises to the secreted. The protein resides in the cell wall. It is found in the extracellular space. Its subcellular location is the apoplast. It catalyses the reaction breaks a beta-(1-&gt;4) bond in the backbone of a xyloglucan and transfers the xyloglucanyl segment on to O-4 of the non-reducing terminal glucose residue of an acceptor, which can be a xyloglucan or an oligosaccharide of xyloglucan.. Its function is as follows. Catalyzes xyloglucan endohydrolysis (XEH) and/or endotransglycosylation (XET). Cleaves and religates xyloglucan polymers, an essential constituent of the primary cell wall, and thereby participates in cell wall construction of growing tissues. This is Probable xyloglucan endotransglucosylase/hydrolase protein 16 (XTH16) from Arabidopsis thaliana (Mouse-ear cress).